The chain runs to 118 residues: DNA-binding protein YG5714_1868 (118 aa).

The protein belongs to the PDCD5 family.

In Saccharolobus islandicus (strain Y.G.57.14 / Yellowstone #1) (Sulfolobus islandicus), this protein is DNA-binding protein YG5714_1868.